The primary structure comprises 453 residues: Protein ECM18 (453 aa).

Residues 130-435 (LLIHGYAASS…SGHNLFLDNP (306 aa)) form the AB hydrolase-1 domain. The short motif at 428 to 433 (HNLFLD) is the HXXXXD motif element.

The protein belongs to the peptidase S33 family. ABHD4/ABHD5 subfamily.

The protein localises to the mitochondrion. May be involved in cell wall organization and biogenesis. This chain is Protein ECM18 (ECM18), found in Saccharomyces cerevisiae (strain ATCC 204508 / S288c) (Baker's yeast).